The primary structure comprises 157 residues: Crossover junction endodeoxyribonuclease RuvC (157 aa).

Catalysis depends on residues aspartate 7, glutamate 66, and aspartate 139. Mg(2+)-binding residues include aspartate 7, glutamate 66, and aspartate 139.

Belongs to the RuvC family. In terms of assembly, homodimer which binds Holliday junction (HJ) DNA. The HJ becomes 2-fold symmetrical on binding to RuvC with unstacked arms; it has a different conformation from HJ DNA in complex with RuvA. In the full resolvosome a probable DNA-RuvA(4)-RuvB(12)-RuvC(2) complex forms which resolves the HJ. Mg(2+) is required as a cofactor.

It localises to the cytoplasm. The enzyme catalyses Endonucleolytic cleavage at a junction such as a reciprocal single-stranded crossover between two homologous DNA duplexes (Holliday junction).. Its function is as follows. The RuvA-RuvB-RuvC complex processes Holliday junction (HJ) DNA during genetic recombination and DNA repair. Endonuclease that resolves HJ intermediates. Cleaves cruciform DNA by making single-stranded nicks across the HJ at symmetrical positions within the homologous arms, yielding a 5'-phosphate and a 3'-hydroxyl group; requires a central core of homology in the junction. The consensus cleavage sequence is 5'-(A/T)TT(C/G)-3'. Cleavage occurs on the 3'-side of the TT dinucleotide at the point of strand exchange. HJ branch migration catalyzed by RuvA-RuvB allows RuvC to scan DNA until it finds its consensus sequence, where it cleaves and resolves the cruciform DNA. The protein is Crossover junction endodeoxyribonuclease RuvC of Campylobacter curvus (strain 525.92).